Reading from the N-terminus, the 257-residue chain is Imidazole glycerol phosphate synthase subunit HisF (257 aa).

Catalysis depends on residues aspartate 11 and aspartate 130.

This sequence belongs to the HisA/HisF family. Heterodimer of HisH and HisF.

Its subcellular location is the cytoplasm. The enzyme catalyses 5-[(5-phospho-1-deoxy-D-ribulos-1-ylimino)methylamino]-1-(5-phospho-beta-D-ribosyl)imidazole-4-carboxamide + L-glutamine = D-erythro-1-(imidazol-4-yl)glycerol 3-phosphate + 5-amino-1-(5-phospho-beta-D-ribosyl)imidazole-4-carboxamide + L-glutamate + H(+). The protein operates within amino-acid biosynthesis; L-histidine biosynthesis; L-histidine from 5-phospho-alpha-D-ribose 1-diphosphate: step 5/9. IGPS catalyzes the conversion of PRFAR and glutamine to IGP, AICAR and glutamate. The HisF subunit catalyzes the cyclization activity that produces IGP and AICAR from PRFAR using the ammonia provided by the HisH subunit. The protein is Imidazole glycerol phosphate synthase subunit HisF of Actinobacillus pleuropneumoniae serotype 7 (strain AP76).